A 235-amino-acid chain; its full sequence is Superoxide dismutase [Mn] 3.1, mitochondrial (235 aa).

The N-terminal 31 residues, 1-31 (MALRTLASKKVLSFPFGGAGRPLAAAASARG), are a transit peptide targeting the mitochondrion. Residues His-59, His-107, Asp-196, and His-200 each coordinate Mn(2+).

Belongs to the iron/manganese superoxide dismutase family. Homotetramer. Mn(2+) is required as a cofactor.

Its subcellular location is the mitochondrion matrix. The catalysed reaction is 2 superoxide + 2 H(+) = H2O2 + O2. In terms of biological role, destroys superoxide anion radicals which are normally produced within the cells and which are toxic to biological systems. The polypeptide is Superoxide dismutase [Mn] 3.1, mitochondrial (SODA.4) (Zea mays (Maize)).